We begin with the raw amino-acid sequence, 638 residues long: Threonine--tRNA ligase (638 aa).

Residues 1-61 (MPIITLPDGT…DYDAEIKIIT (61 aa)) enclose the TGS domain. Positions 242–533 (DHRKIGKKMD…LIENYAGNFP (292 aa)) are catalytic. Residues Cys333, His384, and His510 each contribute to the Zn(2+) site.

This sequence belongs to the class-II aminoacyl-tRNA synthetase family. As to quaternary structure, homodimer. Zn(2+) is required as a cofactor.

The protein resides in the cytoplasm. It carries out the reaction tRNA(Thr) + L-threonine + ATP = L-threonyl-tRNA(Thr) + AMP + diphosphate + H(+). In terms of biological role, catalyzes the attachment of threonine to tRNA(Thr) in a two-step reaction: L-threonine is first activated by ATP to form Thr-AMP and then transferred to the acceptor end of tRNA(Thr). Also edits incorrectly charged L-seryl-tRNA(Thr). This chain is Threonine--tRNA ligase, found in Prochlorococcus marinus (strain MIT 9211).